Consider the following 97-residue polypeptide: Co-chaperonin GroES (97 aa).

The protein belongs to the GroES chaperonin family. In terms of assembly, heptamer of 7 subunits arranged in a ring. Interacts with the chaperonin GroEL.

It localises to the cytoplasm. Together with the chaperonin GroEL, plays an essential role in assisting protein folding. The GroEL-GroES system forms a nano-cage that allows encapsulation of the non-native substrate proteins and provides a physical environment optimized to promote and accelerate protein folding. GroES binds to the apical surface of the GroEL ring, thereby capping the opening of the GroEL channel. The protein is Co-chaperonin GroES of Buchnera aphidicola subsp. Pemphigus spyrothecae.